Consider the following 448-residue polypeptide: Chromosomal replication initiator protein DnaA (448 aa).

The interval M1–K73 is domain I, interacts with DnaA modulators. A domain II region spans residues K73–T109. Residues M110–S326 form a domain III, AAA+ region region. ATP contacts are provided by G154, G156, K157, and T158. A domain IV, binds dsDNA region spans residues S327–K448.

It belongs to the DnaA family. As to quaternary structure, oligomerizes as a right-handed, spiral filament on DNA at oriC.

It is found in the cytoplasm. Plays an essential role in the initiation and regulation of chromosomal replication. ATP-DnaA binds to the origin of replication (oriC) to initiate formation of the DNA replication initiation complex once per cell cycle. Binds the DnaA box (a 9 base pair repeat at the origin) and separates the double-stranded (ds)DNA. Forms a right-handed helical filament on oriC DNA; dsDNA binds to the exterior of the filament while single-stranded (ss)DNA is stabiized in the filament's interior. The ATP-DnaA-oriC complex binds and stabilizes one strand of the AT-rich DNA unwinding element (DUE), permitting loading of DNA polymerase. After initiation quickly degrades to an ADP-DnaA complex that is not apt for DNA replication. Binds acidic phospholipids. The sequence is that of Chromosomal replication initiator protein DnaA from Clostridium botulinum (strain 657 / Type Ba4).